Reading from the N-terminus, the 130-residue chain is Tripartite terminase subunit 2 (130 aa).

This sequence belongs to the herpesviridae TRM2 protein family. As to quaternary structure, associates with TRM1 and TRM3 to form the tripartite terminase complex.

Its subcellular location is the host nucleus. In terms of biological role, component of the molecular motor that translocates viral genomic DNA in empty capsid during DNA packaging. Forms a tripartite terminase complex together with TRM1 and TRM3 in the host cytoplasm. Once the complex reaches the host nucleus, it interacts with the capsid portal vertex. This portal forms a ring in which genomic DNA is translocated into the capsid. In Homo sapiens (Human), this protein is Tripartite terminase subunit 2.